A 360-amino-acid chain; its full sequence is Protein RecA (360 aa).

77 to 84 provides a ligand contact to ATP; that stretch reads GPESSGKT.

Belongs to the RecA family.

Its subcellular location is the cytoplasm. In terms of biological role, can catalyze the hydrolysis of ATP in the presence of single-stranded DNA, the ATP-dependent uptake of single-stranded DNA by duplex DNA, and the ATP-dependent hybridization of homologous single-stranded DNAs. It interacts with LexA causing its activation and leading to its autocatalytic cleavage. The chain is Protein RecA from Chelativorans sp. (strain BNC1).